The following is a 356-amino-acid chain: uncharacterized protein (356 aa).

A signal peptide spans 1-21 (MKLITAPCRALLALPFCYAFS).

This is an uncharacterized protein from Escherichia coli (strain K12).